The following is a 514-amino-acid chain: H/ACA ribonucleoprotein complex subunit DKC1 (514 aa).

At A2 the chain carries N-acetylalanine. The segment at 2-21 (ADAEVIILPKKHKKKKERKS) is nucleolar localization. A Glycyl lysine isopeptide (Lys-Gly) (interchain with G-Cter in SUMO2) cross-link involves residue K20. S21 bears the Phosphoserine mark. Glycyl lysine isopeptide (Lys-Gly) (interchain with G-Cter in SUMO2) cross-links involve residues K39 and K43. The Nucleophile role is filled by D125. Residue K191 forms a Glycyl lysine isopeptide (Lys-Gly) (interchain with G-Cter in SUMO2) linkage. The region spanning 296–371 (HKRLVMKDSA…IVAKIKRVIM (76 aa)) is the PUA domain. The residue at position 387 (S387) is a Phosphoserine. A Glycyl lysine isopeptide (Lys-Gly) (interchain with G-Cter in SUMO2) cross-link involves residue K394. K413 is covalently cross-linked (Glycyl lysine isopeptide (Lys-Gly) (interchain with G-Cter in SUMO1); alternate). Residue K413 forms a Glycyl lysine isopeptide (Lys-Gly) (interchain with G-Cter in SUMO2); alternate linkage. Residues K424 and K433 each participate in a glycyl lysine isopeptide (Lys-Gly) (interchain with G-Cter in SUMO2) cross-link. A disordered region spans residues 443 to 514 (KTAKRKRESE…KAKEVELVSE (72 aa)). A nuclear and nucleolar localization region spans residues 446–514 (KRKRESESES…KAKEVELVSE (69 aa)). A phosphoserine mark is found at S451, S453, and S455. T458 carries the phosphothreonine modification. K467 is covalently cross-linked (Glycyl lysine isopeptide (Lys-Gly) (interchain with G-Cter in SUMO2)). A compositionally biased stretch (basic residues) spans 468–480 (KEKKKSKKDKKAK). Residues S485, S494, and S513 each carry the phosphoserine modification.

Belongs to the pseudouridine synthase TruB family. In terms of assembly, part of the H/ACA small nucleolar ribonucleoprotein (H/ACA snoRNP) complex, which contains NHP2/NOLA2, GAR1/NOLA1, NOP10/NOLA3, and DKC1/NOLA4, which is presumed to be the catalytic subunit. The complex contains a stable core formed by binding of one or two NOP10-DKC1 heterodimers to NHP2; GAR1 subsequently binds to this core via DKC1. The complex binds a box H/ACA small nucleolar RNA (snoRNA), which may target the specific site of modification within the RNA substrate. During assembly, the complex contains NAF1 instead of GAR1/NOLA1. The complex also interacts with TERC, which contains a 3'-terminal domain related to the box H/ACA snoRNAs. Specific interactions with snoRNAs or TERC are mediated by GAR1 and NHP2. Associates with NOLC1/NOPP140. H/ACA snoRNPs interact with the SMN complex, consisting of SMN1 or SMN2, GEMIN2/SIP1, DDX20/GEMIN3, and GEMIN4. This is mediated by interaction between GAR1 and SMN1 or SMN2. The SMN complex may be required for correct assembly of the H/ACA snoRNP complex. Component of the telomerase holoenzyme complex composed of one molecule of TERT, one molecule of WRAP53/TCAB1, two molecules of H/ACA ribonucleoprotein complex subunits DKC1, NOP10, NHP2 and GAR1, and a telomerase RNA template component (TERC). The telomerase holoenzyme complex is associated with TEP1, SMG6/EST1A and POT1. Interacts with SHQ1; this interaction may lead to the stabilization of DKC1, from the time of its synthesis until its association with NOP10, NHP2, and NAF1 at the nascent H/ACA RNA. Interacts with HMBOX1. Interacts with DHX36. In terms of tissue distribution, ubiquitously expressed.

It is found in the nucleus. The protein resides in the nucleolus. It localises to the cajal body. The protein localises to the cytoplasm. It carries out the reaction uridine in 5S rRNA = pseudouridine in 5S rRNA. Its function is as follows. Catalytic subunit of H/ACA small nucleolar ribonucleoprotein (H/ACA snoRNP) complex, which catalyzes pseudouridylation of rRNA. This involves the isomerization of uridine such that the ribose is subsequently attached to C5, instead of the normal N1. Each rRNA can contain up to 100 pseudouridine ('psi') residues, which may serve to stabilize the conformation of rRNAs. Required for ribosome biogenesis and telomere maintenance. Also required for correct processing or intranuclear trafficking of TERC, the RNA component of the telomerase reverse transcriptase (TERT) holoenzyme. In terms of biological role, promotes cell to cell and cell to substratum adhesion, increases the cell proliferation rate and leads to cytokeratin hyper-expression. The chain is H/ACA ribonucleoprotein complex subunit DKC1 from Homo sapiens (Human).